The chain runs to 37 residues: Omega/M-ectatotoxin-Et1a subunit A (37 aa).

A disulfide bridge links Cys-12 with Cys-34.

This sequence belongs to the ectatomin family. Ectatomin-Et subfamily. Heterodimer of an A and a B chain; disulfide-linked. In terms of tissue distribution, expressed by the venom gland.

It localises to the secreted. Its subcellular location is the target cell membrane. Algogenic for animals, human and insects. At high concentrations (0.5-1 uM), it acts as a pore-forming protein that forms nonselective cation channels both in cell and artificial membranes. It is weakly selective for cation over anions channel conductance is identical in both directions. At lower concentrations (1-10 nM), this heterodimer inhibits cardiac L-type calcium currents in isolated rat cardiac ventricular myocytes. The chain is Omega/M-ectatotoxin-Et1a subunit A from Ectatomma tuberculatum (Selva ant).